A 499-amino-acid chain; its full sequence is Alpha-internexin (499 aa).

The tract at residues 1–87 (MSFGSEHYLC…SQAAARTNEY (87 aa)) is head. The residue at position 72 (S72) is a Phosphoserine. The tract at residues 88-129 (KIIRTNEKEQLQGLNDRFAVFIEKVHQLETQNRALEAELAAL) is coil 1A. The IF rod domain occupies 94–407 (EKEQLQGLND…KLLEGEETRF (314 aa)). A linker 1 region spans residues 130–142 (RQRHAEPSRVGEL). Residues 143–238 (FQRELRDLRA…QVHDEEVAEL (96 aa)) are coil 1B. S219 carries the phosphoserine modification. The segment at 239–262 (LATLQASSQAAAEVDVTVAKPDLT) is linker 2. Residues 263–408 (SALREIRAQY…LLEGEETRFS (146 aa)) form a coil 2 region. K290 is modified (N6-acetyllysine). S335 is subject to Phosphoserine. A tail region spans residues 409–499 (TSGLSISGLN…EETTISSQKI (91 aa)). Residues 441–466 (STGLSLKKEEEEEEASKVASKKTSQI) form a disordered region. Residues S469 and S496 each carry the phosphoserine modification.

The protein belongs to the intermediate filament family. In terms of assembly, forms homodimers (in vitro). Forms heterodimers with NEFL, NEFM or NEFH (in vitro). O-glycosylated. In terms of tissue distribution, found predominantly in adult CNS.

Functionally, class-IV neuronal intermediate filament that is able to self-assemble. It is involved in the morphogenesis of neurons. It may form an independent structural network without the involvement of other neurofilaments or it may cooperate with NEFL to form the filamentous backbone to which NEFM and NEFH attach to form the cross-bridges. May also cooperate with the neuronal intermediate filament protein PRPH to form filamentous networks. This is Alpha-internexin (INA) from Homo sapiens (Human).